A 681-amino-acid chain; its full sequence is MLPEFTPVNNLTTQMAQQEIATLQKRLTDYGVAYYEEDAPLVEDYIYDAFYARLVLLEAQFPQFVTPDSPTQNVGGAKVKSGLAKVVHPAPMLSLGDVFSLEELQEWDERTTKTLGFQSEYNLELKIDGLAVALTYVDGKLVQASTRGNGSIGEDVTANVKTIRSIPQTLTEPITIEVRGEIYMPKSSFATLNKQREADGLEPFANPRNAAAGSLRQLNVAITKKRELSAFVYYTADPDAIGVTTQSGALERFAALGLPTDDHNRVIATMADIDAYIAEYTSQRERLAYGIDGVVVKVNQLDNQLDLGHTVKIPRWAIAYKFPPEEALTVVRDIEWTVGRTGAVTPTAVMDPVQLAGTTVQRASLHNPDYLNAKDIRIGDTVTLHKAGDIIPEIGQVLLAERPANNQVYDIPTFCPACHSELVHLDGEVALRCINPFCVAQIQEKLTHFASRNAMNIDGMGPRVVSQLLKANYIQDVASIYRLQETQLLSLDKFKEKSVTNLLSAITTSKSNSLERLLFGLGIRMVGAKAARLIAEKFKTLQAIADASVIDIASIAGIGETIALSVVQYFKTPEAKQLLIELQEAGVNQTYLSDVIVDETSFFYGKKIVLTGKLEKGSRTEATKWLQDHGAQVTGSVSAKTDLLIAGEDAGSKLDKANALGVTVWDEQAFIEAQAKEGTDK.

NAD(+)-binding positions include 44–48 (DYIYD), 94–95 (SL), and Glu124. Lys126 functions as the N6-AMP-lysine intermediate in the catalytic mechanism. NAD(+) is bound by residues Arg147, Glu181, Lys297, and Lys321. Positions 415, 418, 433, and 438 each coordinate Zn(2+). Residues 598 to 681 (DETSFFYGKK…EAQAKEGTDK (84 aa)) enclose the BRCT domain.

Belongs to the NAD-dependent DNA ligase family. LigA subfamily. Mg(2+) is required as a cofactor. Mn(2+) serves as cofactor.

It carries out the reaction NAD(+) + (deoxyribonucleotide)n-3'-hydroxyl + 5'-phospho-(deoxyribonucleotide)m = (deoxyribonucleotide)n+m + AMP + beta-nicotinamide D-nucleotide.. DNA ligase that catalyzes the formation of phosphodiester linkages between 5'-phosphoryl and 3'-hydroxyl groups in double-stranded DNA using NAD as a coenzyme and as the energy source for the reaction. It is essential for DNA replication and repair of damaged DNA. The polypeptide is DNA ligase (Leuconostoc citreum (strain KM20)).